A 500-amino-acid chain; its full sequence is Cytochrome P450 71B35 (500 aa).

Residues 1-21 (MAHIWLLPLIFLVCILLAVFN) traverse the membrane as a helical segment. Cys-439 is a binding site for heme.

It belongs to the cytochrome P450 family. Requires heme as cofactor.

The protein localises to the membrane. This is Cytochrome P450 71B35 (CYP71B35) from Arabidopsis thaliana (Mouse-ear cress).